We begin with the raw amino-acid sequence, 552 residues long: Gamma-aminobutyric acid receptor subunit alpha-4 (552 aa).

An N-terminal signal peptide occupies residues 1-35 (MVSVQKVPAIALCSGVSLALLHFLCLAACLNESPG). The Extracellular portion of the chain corresponds to 36–259 (QNSKDEKLCP…FHLRRKMGYF (224 aa)). N-linked (GlcNAc...) asparagine glycosylation occurs at Asn-47. Arg-100 contacts 4-aminobutanoate. Asn-144 and Asn-157 each carry an N-linked (GlcNAc...) asparagine glycan. Residue Thr-163 participates in 4-aminobutanoate binding. A disulfide bond links Cys-172 and Cys-186. A helical transmembrane segment spans residues 260–280 (MIQTYIPCIMTVILSQVSFWI). The Cytoplasmic segment spans residues 281-284 (NKES). The chain crosses the membrane as a helical span at residues 285 to 305 (VPARTVFGITTVLTMTTLSIS). Residues 306–318 (ARHSLPKVSYATA) are Extracellular-facing. The helical transmembrane segment at 319–341 (MDWFIAVCFAFVFSALIEFAAVN) threads the bilayer. Residues 342-515 (YFTNIQMQKA…PPPSGSGTSK (174 aa)) are Cytoplasmic-facing. Disordered stretches follow at residues 353–480 (KKIS…FGSR) and 492–513 (GAAGNVSATPPPPAPPPSGSGT). Positions 396–406 (SESDVKSRTEV) are enriched in basic and acidic residues. The span at 407–422 (GNHSSKTSAVQESSEA) shows a compositional bias: polar residues. The span at 445-458 (SAAARGLSSAASPS) shows a compositional bias: low complexity. Positions 500–509 (TPPPPAPPPS) are enriched in pro residues. The helical transmembrane segment at 516–538 (IDKYARILFPVTFGAFNMVYWVV) threads the bilayer. The Extracellular portion of the chain corresponds to 539–552 (YLSKDTMEKSESLM).

It belongs to the ligand-gated ion channel (TC 1.A.9) family. Gamma-aminobutyric acid receptor (TC 1.A.9.5) subfamily. GABRA4 sub-subfamily. As to quaternary structure, heteropentamer, formed by a combination of alpha (GABRA1-6), beta (GABRB1-3), gamma (GABRG1-3), delta (GABRD), epsilon (GABRE), rho (GABRR1-3), pi (GABRP) and theta (GABRQ) chains, each subunit exhibiting distinct physiological and pharmacological properties. In terms of tissue distribution, expressed in the brain.

Its subcellular location is the cell membrane. The protein localises to the postsynaptic cell membrane. The enzyme catalyses chloride(in) = chloride(out). Potentiated by gaboxadol. Potentiated by histamine. Alpha subunit of the heteropentameric ligand-gated chloride channel gated by gamma-aminobutyric acid (GABA), a major inhibitory neurotransmitter in the brain. GABA-gated chloride channels, also named GABA(A) receptors (GABAAR), consist of five subunits arranged around a central pore and contain GABA active binding site(s) located at the alpha and beta subunit interface(s). Alpha-4/GABRA4 subunit often assembles with delta or gamma-2 subunits, in combination with beta subunits. When activated by GABA, GABAARs selectively allow the flow of chloride anions across the cell membrane down their electrochemical gradient. GABAARs containing alpha-4 are predominantly extrasynaptic, contributing to tonic inhibition in dentate granule cells and thalamic relay neurons. Extrasynaptic alpha-4-containing GABAARs control levels of excitability and network activity. GABAAR containing alpha-4-beta-3-delta subunits can simultaneously bind GABA and histamine where histamine binds at the interface of two neighboring beta subunits, which may be involved in the regulation of sleep and wakefulness. This chain is Gamma-aminobutyric acid receptor subunit alpha-4, found in Mus musculus (Mouse).